A 307-amino-acid polypeptide reads, in one-letter code: Ornithine carbamoyltransferase (307 aa).

Residues 53-56 (STRT), glutamine 80, arginine 104, and 131-134 (HPCQ) each bind carbamoyl phosphate. L-ornithine is bound by residues asparagine 162, aspartate 220, and 224-225 (SM). Carbamoyl phosphate-binding positions include 260 to 261 (CL) and arginine 288.

It belongs to the aspartate/ornithine carbamoyltransferase superfamily. OTCase family.

Its subcellular location is the cytoplasm. It carries out the reaction carbamoyl phosphate + L-ornithine = L-citrulline + phosphate + H(+). Its pathway is amino-acid biosynthesis; L-arginine biosynthesis; L-arginine from L-ornithine and carbamoyl phosphate: step 1/3. In terms of biological role, reversibly catalyzes the transfer of the carbamoyl group from carbamoyl phosphate (CP) to the N(epsilon) atom of ornithine (ORN) to produce L-citrulline. The chain is Ornithine carbamoyltransferase from Nitrosomonas eutropha (strain DSM 101675 / C91 / Nm57).